Consider the following 44-residue polypeptide: Cytochrome b559 subunit beta (44 aa).

A helical membrane pass occupies residues Trp19 to Ala35. His23 is a binding site for heme.

This sequence belongs to the PsbE/PsbF family. Heterodimer of an alpha subunit and a beta subunit. PSII is composed of 1 copy each of membrane proteins PsbA, PsbB, PsbC, PsbD, PsbE, PsbF, PsbH, PsbI, PsbJ, PsbK, PsbL, PsbM, PsbT, PsbX, PsbY, PsbZ, Psb30/Ycf12, at least 3 peripheral proteins of the oxygen-evolving complex and a large number of cofactors. It forms dimeric complexes. Requires heme b as cofactor.

It localises to the plastid. Its subcellular location is the chloroplast thylakoid membrane. Functionally, this b-type cytochrome is tightly associated with the reaction center of photosystem II (PSII). PSII is a light-driven water:plastoquinone oxidoreductase that uses light energy to abstract electrons from H(2)O, generating O(2) and a proton gradient subsequently used for ATP formation. It consists of a core antenna complex that captures photons, and an electron transfer chain that converts photonic excitation into a charge separation. This Gracilaria tenuistipitata var. liui (Red alga) protein is Cytochrome b559 subunit beta.